The chain runs to 145 residues: Large ribosomal subunit protein uL13 (145 aa).

Belongs to the universal ribosomal protein uL13 family. Part of the 50S ribosomal subunit.

In terms of biological role, this protein is one of the early assembly proteins of the 50S ribosomal subunit, although it is not seen to bind rRNA by itself. It is important during the early stages of 50S assembly. In Geobacillus thermodenitrificans (strain NG80-2), this protein is Large ribosomal subunit protein uL13.